A 556-amino-acid chain; its full sequence is Testis-specific protein 10-interacting protein (556 aa).

Residues Met-1–Arg-16 are compositionally biased toward polar residues. Disordered stretches follow at residues Met-1–Pro-31, Gly-50–Arg-102, Leu-123–Pro-155, and Gly-179–Lys-309. Polar residues predominate over residues Gly-208–Ser-219. A compositionally biased stretch (acidic residues) spans Ser-244–Glu-258. Polar residues predominate over residues Gln-289 to Asn-301. Residues Arg-379 to Ala-464 adopt a coiled-coil conformation. The segment at Ala-503 to Pro-556 is disordered.

The protein is Testis-specific protein 10-interacting protein (TSGA10IP) of Homo sapiens (Human).